Consider the following 244-residue polypeptide: Small ribosomal subunit protein uS2 (244 aa).

The protein belongs to the universal ribosomal protein uS2 family.

This Hydrogenovibrio crunogenus (strain DSM 25203 / XCL-2) (Thiomicrospira crunogena) protein is Small ribosomal subunit protein uS2.